A 292-amino-acid polypeptide reads, in one-letter code: MKDIATPNRTKDIVEKYGFSFKKSLGQNFLIDTNVLNRIVDHAEIGSESGAIEIGPGIGALTEQLAKRAKKVVAFEIDQRLLPILDETLAPYGNVTVINKDVLKADVHEVFNEQFEEGQDVMVVANLPYYITTPILFKLLEEKLPVRGFVVMMQKEVGDRLAAKPGTKEYGSLSIAIQYYTEVETVMTVPRTVFVPQPNVDSAIIRLLKRPKPVVEVTDETFFFEVVRASFAQRRKTLMNNLSNNLNGFPKDKELLDRILTEVGIDPKRRGETLSIEEFATLSNALVLHKLS.

S-adenosyl-L-methionine contacts are provided by N28, L30, G55, E76, D101, and N126.

It belongs to the class I-like SAM-binding methyltransferase superfamily. rRNA adenine N(6)-methyltransferase family. RsmA subfamily.

Its subcellular location is the cytoplasm. It carries out the reaction adenosine(1518)/adenosine(1519) in 16S rRNA + 4 S-adenosyl-L-methionine = N(6)-dimethyladenosine(1518)/N(6)-dimethyladenosine(1519) in 16S rRNA + 4 S-adenosyl-L-homocysteine + 4 H(+). Its function is as follows. Specifically dimethylates two adjacent adenosines (A1518 and A1519) in the loop of a conserved hairpin near the 3'-end of 16S rRNA in the 30S particle. May play a critical role in biogenesis of 30S subunits. The sequence is that of Ribosomal RNA small subunit methyltransferase A from Bacillus cereus (strain G9842).